The primary structure comprises 353 residues: MISENAPSSPSSKPLLRALRGEAVWPPPVWLMRQAGRYLPEFRAMRDRADFLTRCMTPDMATELTIQPIRRYGMDGAILFSDILILPWAMGQSLEFIDGRGPVLGAIRSEADLARLDPKRVQDAVAPVRETLSRLTKELPDVTTLLGFAGSPFTVSCYMVEGGGSRDFAETRRMMQTNPALFDRLIDTLTSSTAEMLCGQIEAGAEAVMLFDSWAGILPPSAFRRYVIEPTRQIVEYIRARHPKTPIIGFPRLGGIMVREYAQKTGVNTLALDTVADPAQISELVSEVRPGLTLQGNMDPMILFSGGETMIREAQAIRDAMRGKPHVFNLGHGVMQHTPPENVAALVEAVRAV.

Substrate-binding positions include 33–37, Asp82, Tyr158, Ser213, and His332; that span reads RQAGR.

It belongs to the uroporphyrinogen decarboxylase family. Homodimer.

The protein localises to the cytoplasm. It carries out the reaction uroporphyrinogen III + 4 H(+) = coproporphyrinogen III + 4 CO2. The protein operates within porphyrin-containing compound metabolism; protoporphyrin-IX biosynthesis; coproporphyrinogen-III from 5-aminolevulinate: step 4/4. Catalyzes the decarboxylation of four acetate groups of uroporphyrinogen-III to yield coproporphyrinogen-III. The protein is Uroporphyrinogen decarboxylase of Gluconobacter oxydans (strain 621H) (Gluconobacter suboxydans).